Consider the following 392-residue polypeptide: Adenine nucleotide transporter BT1, chloroplastic/mitochondrial (392 aa).

Solcar repeat units lie at residues 108 to 191 (NPSL…VNKK), 202 to 286 (IPIP…LRKA), and 296 to 384 (IGNI…CKKI). 6 helical membrane passes run 113–133 (RLLSGAVAGAVSRTVVAPLET), 168–188 (LVNVIRVAPARAVELFVFETV), 204–224 (IPASLLAGACAGVSQTLLTYP), 263–283 (APSLIGVVPYAATNYFAYDSL), 302–322 (LLIGSLAGALSSTATFPLEVA), and 359–379 (GLGPSCLKLVPAAGISFMCYE).

Belongs to the mitochondrial carrier (TC 2.A.29) family. As to expression, expressed in root tips, the central cylinder of young roots, and maturating and germinating pollen.

The protein localises to the plastid. The protein resides in the chloroplast inner membrane. Its subcellular location is the mitochondrion inner membrane. Inhibited by pyridoxal 5-phosphate but not mersalyl. Its function is as follows. Probable mitochondrial adenylate carrier that catalyzes the transport of ATP, ADP and AMP, but not ADP-glucose. Recombinant BT1 shows a unidirectional mode of transport in intact E.coli cells. May function as a plastidial nucleotide uniport carrier required to export newly synthesized adenylates into the cytosol. May be involved in abiotic stress response. This Arabidopsis thaliana (Mouse-ear cress) protein is Adenine nucleotide transporter BT1, chloroplastic/mitochondrial (BT1).